The chain runs to 178 residues: Ribosome maturation factor RimM (178 aa).

One can recognise a PRC barrel domain in the interval 101 to 178 (ADEYYWYQLV…VMRVEWDADF (78 aa)).

This sequence belongs to the RimM family. In terms of assembly, binds ribosomal protein uS19.

The protein resides in the cytoplasm. Its function is as follows. An accessory protein needed during the final step in the assembly of 30S ribosomal subunit, possibly for assembly of the head region. Essential for efficient processing of 16S rRNA. May be needed both before and after RbfA during the maturation of 16S rRNA. It has affinity for free ribosomal 30S subunits but not for 70S ribosomes. The sequence is that of Ribosome maturation factor RimM from Pseudomonas putida (strain GB-1).